We begin with the raw amino-acid sequence, 932 residues long: DNA mismatch repair protein MutS (932 aa).

615–622 (GPNMAGKS) is a binding site for ATP.

Belongs to the DNA mismatch repair MutS family.

Functionally, this protein is involved in the repair of mismatches in DNA. It is possible that it carries out the mismatch recognition step. This protein has a weak ATPase activity. This chain is DNA mismatch repair protein MutS, found in Clostridium botulinum (strain Langeland / NCTC 10281 / Type F).